Here is a 320-residue protein sequence, read N- to C-terminus: Ferrochelatase (320 aa).

The Fe cation site is built by H194 and E275.

It belongs to the ferrochelatase family. Monomer.

The protein resides in the cytoplasm. It catalyses the reaction heme b + 2 H(+) = protoporphyrin IX + Fe(2+). It participates in porphyrin-containing compound metabolism; protoheme biosynthesis; protoheme from protoporphyrin-IX: step 1/1. Functionally, catalyzes the ferrous insertion into protoporphyrin IX. In Escherichia coli O127:H6 (strain E2348/69 / EPEC), this protein is Ferrochelatase.